Reading from the N-terminus, the 393-residue chain is Peptidyl-prolyl cis-trans isomerase CYP7 (393 aa).

One can recognise a PPIase cyclophilin-type domain in the interval 8-196 (YLDISIDKKP…SDVRISDCGV (189 aa)). 3 TPR repeats span residues 240-273 (ANII…INEY), 292-325 (MKIY…DNVP), and 330-363 (AKAY…NPDD).

Interacts with RPD3 and CNS1.

It carries out the reaction [protein]-peptidylproline (omega=180) = [protein]-peptidylproline (omega=0). PPIases accelerate the folding of proteins. It catalyzes the cis-trans isomerization of proline imidic peptide bonds in oligopeptides. Plays a major role in negative regulation of the heat shock transcription factor (HSF). This Saccharomyces cerevisiae (strain ATCC 204508 / S288c) (Baker's yeast) protein is Peptidyl-prolyl cis-trans isomerase CYP7 (CPR7).